The sequence spans 387 residues: 3-ketoacyl-CoA thiolase (387 aa).

Catalysis depends on Cys-91, which acts as the Acyl-thioester intermediate. Residues His-343 and Cys-373 each act as proton acceptor in the active site.

Belongs to the thiolase-like superfamily. Thiolase family. As to quaternary structure, heterotetramer of two alpha chains (FadB) and two beta chains (FadA).

The protein localises to the cytoplasm. It carries out the reaction an acyl-CoA + acetyl-CoA = a 3-oxoacyl-CoA + CoA. It functions in the pathway lipid metabolism; fatty acid beta-oxidation. Catalyzes the final step of fatty acid oxidation in which acetyl-CoA is released and the CoA ester of a fatty acid two carbons shorter is formed. The protein is 3-ketoacyl-CoA thiolase of Idiomarina loihiensis (strain ATCC BAA-735 / DSM 15497 / L2-TR).